The following is a 338-amino-acid chain: Dihydroorotate dehydrogenase (quinone) (338 aa).

FMN is bound by residues Ala-59–Lys-63 and Thr-83. Position 63 (Lys-63) interacts with substrate. Asn-108–Phe-112 lines the substrate pocket. Residues Asn-136 and Asn-169 each contribute to the FMN site. Substrate is bound at residue Asn-169. Ser-172 acts as the Nucleophile in catalysis. Asn-174 provides a ligand contact to substrate. Residues Lys-214 and Thr-242 each contribute to the FMN site. Asn-243–Thr-244 contacts substrate. Residues Gly-265, Gly-294, and Tyr-315–Ser-316 each bind FMN.

The protein belongs to the dihydroorotate dehydrogenase family. Type 2 subfamily. As to quaternary structure, monomer. It depends on FMN as a cofactor.

Its subcellular location is the cell membrane. The enzyme catalyses (S)-dihydroorotate + a quinone = orotate + a quinol. The protein operates within pyrimidine metabolism; UMP biosynthesis via de novo pathway; orotate from (S)-dihydroorotate (quinone route): step 1/1. Functionally, catalyzes the conversion of dihydroorotate to orotate with quinone as electron acceptor. This chain is Dihydroorotate dehydrogenase (quinone), found in Azoarcus sp. (strain BH72).